Reading from the N-terminus, the 98-residue chain is MSRRCEITGVGPMVGHNVSHSNIKTKRRFMPNLTKVTVLSDALGQNVTLRVTNAALRTVDAKGGLDAVLLKARDEVLSPRALKIKRQIKAKLAEQPAA.

Belongs to the bacterial ribosomal protein bL28 family.

This Phenylobacterium zucineum (strain HLK1) protein is Large ribosomal subunit protein bL28.